A 236-amino-acid polypeptide reads, in one-letter code: MTTPANTTQAVGSTKSTTTTTAGATPANSGLFTIPDGDFFSTAKAVVASNAVATNEDLAKIQEIWKDKKIPSDTMAQAAWDLVRHCADVGSSAQTEMIGTGPYSNGVSRARLAAAIKEVCTLRQFCKKYAPVVWNWMLTNNSPPANWQAQGFKPEHKFAAFDFFDGVTNPAAITPKEGLMRPPSEAEMNAAQTAAFVKITKARAQSNDFASLDAAVTRGRITGTTVAEAVVSLPPP.

Positions 1–27 (MTTPANTTQAVGSTKSTTTTTAGATPA) are disordered. The segment covering 7-27 (TTQAVGSTKSTTTTTAGATPA) has biased composition (low complexity).

This sequence belongs to the potexvirus capsid protein family.

It localises to the virion. Its function is as follows. Required for genome encapsidation. Forms ribonucleoprotein complexes along with TGB1 helicase and viral RNA. This chain is Coat protein, found in Brassica campestris (Field mustard).